Here is a 118-residue protein sequence, read N- to C-terminus: Small ribosomal subunit protein uS13 (118 aa).

The disordered stretch occupies residues 94–118; that stretch reads SLPVRGQRTKTNARTRKGPRKPIKK.

This sequence belongs to the universal ribosomal protein uS13 family. Part of the 30S ribosomal subunit. Forms a loose heterodimer with protein S19. Forms two bridges to the 50S subunit in the 70S ribosome.

Functionally, located at the top of the head of the 30S subunit, it contacts several helices of the 16S rRNA. In the 70S ribosome it contacts the 23S rRNA (bridge B1a) and protein L5 of the 50S subunit (bridge B1b), connecting the 2 subunits; these bridges are implicated in subunit movement. Contacts the tRNAs in the A and P-sites. The protein is Small ribosomal subunit protein uS13 of Actinobacillus pleuropneumoniae serotype 5b (strain L20).